The following is a 437-amino-acid chain: GTPase Obg (437 aa).

Residues 2–160 (SMFLDTAKIK…RNLELELKVL (159 aa)) enclose the Obg domain. Residues 161–338 (ADVGLVGFPS…LLEATAELLE (178 aa)) form the OBG-type G domain. GTP contacts are provided by residues 167 to 174 (GFPSVGKS), 192 to 196 (FTTIV), 214 to 217 (DLPG), 284 to 287 (NKMD), and 319 to 321 (SGI). Mg(2+) contacts are provided by serine 174 and threonine 194. One can recognise an OCT domain in the interval 359-437 (GFNPDEPEFA…IGKFEFEFVD (79 aa)).

Belongs to the TRAFAC class OBG-HflX-like GTPase superfamily. OBG GTPase family. Monomer. Requires Mg(2+) as cofactor.

The protein resides in the cytoplasm. In terms of biological role, an essential GTPase which binds GTP, GDP and possibly (p)ppGpp with moderate affinity, with high nucleotide exchange rates and a fairly low GTP hydrolysis rate. Plays a role in control of the cell cycle, stress response, ribosome biogenesis and in those bacteria that undergo differentiation, in morphogenesis control. The protein is GTPase Obg of Streptococcus suis (strain 05ZYH33).